The chain runs to 243 residues: tRNA pseudouridine synthase A (243 aa).

D54 (nucleophile) is an active-site residue. Y112 contributes to the substrate binding site.

Belongs to the tRNA pseudouridine synthase TruA family. In terms of assembly, homodimer.

The catalysed reaction is uridine(38/39/40) in tRNA = pseudouridine(38/39/40) in tRNA. Functionally, formation of pseudouridine at positions 38, 39 and 40 in the anticodon stem and loop of transfer RNAs. In Onion yellows phytoplasma (strain OY-M), this protein is tRNA pseudouridine synthase A.